Reading from the N-terminus, the 641-residue chain is Kelch-like protein 22 (641 aa).

The tract at residues 1–25 (MAEDLETMKPSQAPQQPSLPQGSSK) is disordered. The segment covering 10-24 (PSQAPQQPSLPQGSS) has biased composition (low complexity). The 68-residue stretch at 50–117 (FDVVLKVEGK…IYTSDLALSV (68 aa)) folds into the BTB domain. 6 Kelch repeats span residues 299–349 (CVVG…VLNN), 350–399 (FVYL…VLGD), 400–446 (FLYA…ALDG), 448–493 (MYVA…ALQE), 494–544 (KIYL…VLAK), and 545–593 (KIFV…VLTL).

Component of the BCR(KLHL22) E3 ubiquitin ligase complex, at least composed of cul3, klhl22 and rbx1.

The protein localises to the cytoplasm. The protein resides in the cytosol. It localises to the cytoskeleton. Its subcellular location is the microtubule organizing center. It is found in the centrosome. The protein localises to the spindle. The protein resides in the nucleus. It localises to the lysosome. Its pathway is protein modification; protein ubiquitination. Its function is as follows. Substrate-specific adapter of a BCR (BTB-CUL3-RBX1) E3 ubiquitin ligase complex. The BCR(KLHL22) ubiquitin ligase complex could mediate the monoubiquitination of PLK1 and regulate its activity in spindle assembly checkpoint (SAC) and chromosome segregation. The BCR(KLHL22) ubiquitin ligase complex may also be responsible for the ubiquitin-dependent proteasomal degradation of DEPDC5 and the activation of the TORC1 pathway. This Xenopus tropicalis (Western clawed frog) protein is Kelch-like protein 22 (klhl22).